The primary structure comprises 2897 residues: Chromodomain-helicase-DNA-binding protein 9 (2897 aa).

Residues 173–201 (QCTSLRSQQNRNNLNPGQNSLSQSKNFMN) show a composition bias toward polar residues. Disordered stretches follow at residues 173 to 265 (QCTS…CSVS), 482 to 525 (QRQP…KQEK), and 537 to 671 (AKER…SAPL). A Glycyl lysine isopeptide (Lys-Gly) (interchain with G-Cter in SUMO2) cross-link involves residue Lys197. Low complexity predominate over residues 220 to 235 (SNSQQSISMQQFSQTS). Polar residues-rich tracts occupy residues 247–260 (HQEGNFNGPSPNMT) and 484–506 (QPPSSKKSDGSGTYTKLQNTQVR). Position 499 is an N6-acetyllysine (Lys499). Residues 508-525 (MSEKKQRKKVESESKQEK) are compositionally biased toward basic and acidic residues. Ser550 is modified (phosphoserine). A compositionally biased stretch (basic and acidic residues) spans 573 to 593 (KPKDKDSKKTKTCSKLKEKTK). Lys596 participates in a covalent cross-link: Glycyl lysine isopeptide (Lys-Gly) (interchain with G-Cter in SUMO2). A Phosphoserine modification is found at Ser611. The segment covering 634–644 (RRSNRQIKRKK) has biased composition (basic residues). The segment covering 645–660 (YAEDIEGKQSEEEVKG) has biased composition (basic and acidic residues). 2 consecutive Chromo domains span residues 690–761 (AIVD…HFFA) and 773–839 (VEVD…RLDR). Positions 868-872 (LNWLL) match the LXXLL motif 1 motif. A Helicase ATP-binding domain is found at 872–1046 (LFNWYNRRNC…FSLLHFLEPL (175 aa)). Residue 885–892 (DEMGLGKT) coordinates ATP. Positions 997–1000 (DEAH) match the DEAH box motif. The LXXLL motif 2 signature appears at 1036 to 1040 (LFSLL). A Helicase C-terminal domain is found at 1186-1337 (LIDKLLPKMK…KAVLQSMSGR (152 aa)). The disordered stretch occupies residues 1461–1484 (KDELAELSEAESEGDEKPKLRRPC). Positions 1465-1474 (AELSEAESEG) are enriched in acidic residues. 2 positions are modified to phosphoserine: Ser1468 and Ser1472. Residues 1475–1484 (DEKPKLRRPC) are compositionally biased toward basic and acidic residues. Residues Lys1588, Lys1738, and Lys1903 each participate in a glycyl lysine isopeptide (Lys-Gly) (interchain with G-Cter in SUMO2) cross-link. Ser2026 carries the post-translational modification Phosphoserine. The LXXLL motif 3 motif lies at 2031–2035 (LPRLL). Residue Lys2038 forms a Glycyl lysine isopeptide (Lys-Gly) (interchain with G-Cter in SUMO2) linkage. 2 disordered regions span residues 2050–2238 (ENLK…QMNN) and 2305–2337 (GAATEYSDPSVPTPPGAGVKEEHDQSTQMSKVK). Phosphoserine is present on residues Ser2058 and Ser2059. A Glycyl lysine isopeptide (Lys-Gly) (interchain with G-Cter in SUMO2) cross-link involves residue Lys2074. Ser2075 and Ser2079 each carry phosphoserine. Residues 2094–2104 (SGGKCETDRRM) show a composition bias toward basic and acidic residues. A compositionally biased stretch (low complexity) spans 2141-2193 (SSCSSRSSSSSSSSSCSHSRSGSSSSSSSSCSSASSSSSSSTSSSSSSSSSSS). A compositionally biased stretch (basic and acidic residues) spans 2203 to 2216 (AQKRESTTHMKAYD). The span at 2221–2238 (ASLSTTQDETQDSFQMNN) shows a compositional bias: polar residues. The tract at residues 2332–2481 (QMSKVKKHVR…LSYTQPQGIP (150 aa)) is binds A/T-rich DNA. Glycyl lysine isopeptide (Lys-Gly) (interchain with G-Cter in SUMO2) cross-links involve residues Lys2350, Lys2356, and Lys2361. Positions 2429 to 2436 (KKRRGRRK) are a.T hook-like. The short motif at 2721–2725 (LPNLL) is the LXXLL motif 4 element. Residues 2729-2777 (GLLTKPTESGTEDKKGSDSKESEGKTERTESQSSENGGENSVSSSPSTS) are disordered. Residues 2739–2758 (TEDKKGSDSKESEGKTERTE) are compositionally biased toward basic and acidic residues. Over residues 2759-2777 (SQSSENGGENSVSSSPSTS) the composition is skewed to low complexity. An LXXLL motif 5 motif is present at residues 2793–2797 (LNPLL). The disordered stretch occupies residues 2827 to 2897 (VQNKNSDLGS…SEDSDSSNED (71 aa)). A compositionally biased stretch (basic and acidic residues) spans 2840 to 2857 (VEVKEEDSRIKDQEDKGG). Residue Lys2843 forms a Glycyl lysine isopeptide (Lys-Gly) (interchain with G-Cter in SUMO2) linkage. Over residues 2877–2888 (ASSGSDSTSSSS) the composition is skewed to low complexity.

The protein belongs to the SNF2/RAD54 helicase family. As to quaternary structure, interacts with PPARA. Probably interacts with ESR1 and NR1I3. Phosphorylated on serine and tyrosine residues. In terms of tissue distribution, widely expressed at low levels. In bone marrow, expression is restricted to osteoprogenitor cells adjacent to mature osteoblasts.

The protein resides in the cytoplasm. The protein localises to the nucleus. It carries out the reaction ATP + H2O = ADP + phosphate + H(+). Probable ATP-dependent chromatin-remodeling factor. Acts as a transcriptional coactivator for PPARA and possibly other nuclear receptors. Has DNA-dependent ATPase activity and binds to A/T-rich DNA. Associates with A/T-rich regulatory regions in promoters of genes that participate in the differentiation of progenitors during osteogenesis. This chain is Chromodomain-helicase-DNA-binding protein 9 (CHD9), found in Homo sapiens (Human).